The primary structure comprises 145 residues: METIMVINGPNLNRLGKREPDIYGRETLSDLHERLIKFAEARGYKADCRQSNHEGDIIDWIHEAEGRSSGVILNPGAFTHYSYAIRDAIASISVPVIEVHLSNVHARESFRHTSVTAPVTKGQIVGLGVIGYELAMLALLEGEKK.

Tyrosine 23 functions as the Proton acceptor in the catalytic mechanism. Residues asparagine 74, histidine 80, and aspartate 87 each coordinate substrate. The active-site Proton donor is histidine 100. Substrate is bound by residues 101-102 (LS) and arginine 111.

It belongs to the type-II 3-dehydroquinase family. Homododecamer.

The enzyme catalyses 3-dehydroquinate = 3-dehydroshikimate + H2O. It participates in metabolic intermediate biosynthesis; chorismate biosynthesis; chorismate from D-erythrose 4-phosphate and phosphoenolpyruvate: step 3/7. Catalyzes a trans-dehydration via an enolate intermediate. The polypeptide is 3-dehydroquinate dehydratase (Halalkalibacterium halodurans (strain ATCC BAA-125 / DSM 18197 / FERM 7344 / JCM 9153 / C-125) (Bacillus halodurans)).